The primary structure comprises 861 residues: Leucine--tRNA ligase (861 aa).

The 'HIGH' region motif lies at 42 to 52 (PYPSGKLHMGH). Residues 618-622 (KMSKS) carry the 'KMSKS' region motif. K621 is a binding site for ATP.

Belongs to the class-I aminoacyl-tRNA synthetase family.

The protein localises to the cytoplasm. The enzyme catalyses tRNA(Leu) + L-leucine + ATP = L-leucyl-tRNA(Leu) + AMP + diphosphate. In Buchnera aphidicola subsp. Baizongia pistaciae (strain Bp), this protein is Leucine--tRNA ligase.